We begin with the raw amino-acid sequence, 429 residues long: Glycine betaine monooxygenase oxygenase subunit (429 aa).

Residues 56 to 163 (WLIAGMTCEI…VKTAGGYIFI (108 aa)) form the Rieske domain. Residues cysteine 98, histidine 100, cysteine 118, and histidine 121 each contribute to the [2Fe-2S] cluster site. 2 residues coordinate Fe cation: histidine 217 and histidine 222.

This sequence belongs to the bacterial ring-hydroxylating dioxygenase alpha subunit family. The system is composed of an oxygenase subunit (GbcA) and a reductase subunit (GbcB). Requires [2Fe-2S] cluster as cofactor. Fe cation is required as a cofactor.

It catalyses the reaction glycine betaine + NADH + O2 + H(+) = N,N-dimethylglycine + formaldehyde + NAD(+) + H2O. Functionally, involved in degradation of glycine betaine. Part of a Rieske-type oxygenase system that catalyzes the conversion of glycine betaine (GB) to dimethylglycine (DMG). This subunit is the terminal oxygenase component of the system. Required for growth on choline and GB, but not for growth on DMG. This Pseudomonas aeruginosa (strain ATCC 15692 / DSM 22644 / CIP 104116 / JCM 14847 / LMG 12228 / 1C / PRS 101 / PAO1) protein is Glycine betaine monooxygenase oxygenase subunit.